The following is a 374-amino-acid chain: DNA/RNA-binding protein ALBA4 (374 aa).

It belongs to the histone-like Alba family.

The protein resides in the cytoplasm. It localises to the cell cortex. Its subcellular location is the perinuclear region. Functionally, possesses DNA- and RNA-binding activities. Binds to DNA with relaxed sequence specificity. May associate with the subtelomeric TARE6 repeats. Regulates the abundance of transcript sub-populations in a stage-specific manner. Regulates activation of male gametocytes. Participates in the coordination of sporozoite development in the oocyst. The polypeptide is DNA/RNA-binding protein ALBA4 (Plasmodium yoelii yoelii).